The primary structure comprises 690 residues: Elongation factor G (690 aa).

A tr-type G domain is found at 8-283 (EDYRNFGIMA…AVVDFLPSPL (276 aa)). GTP-binding positions include 17-24 (AHIDAGKT), 81-85 (DTPGH), and 135-138 (NKMD).

It belongs to the TRAFAC class translation factor GTPase superfamily. Classic translation factor GTPase family. EF-G/EF-2 subfamily.

The protein resides in the cytoplasm. Its function is as follows. Catalyzes the GTP-dependent ribosomal translocation step during translation elongation. During this step, the ribosome changes from the pre-translocational (PRE) to the post-translocational (POST) state as the newly formed A-site-bound peptidyl-tRNA and P-site-bound deacylated tRNA move to the P and E sites, respectively. Catalyzes the coordinated movement of the two tRNA molecules, the mRNA and conformational changes in the ribosome. This chain is Elongation factor G, found in Nitrobacter hamburgensis (strain DSM 10229 / NCIMB 13809 / X14).